The primary structure comprises 208 residues: Redox-sensing transcriptional repressor Rex (208 aa).

The segment at residues 15–54 (SYYMCLERLLDEGVEVVSSEELARRLDLKASQIRKDLSYF) is a DNA-binding region (H-T-H motif). Position 89 to 94 (89 to 94 (GAGNIG)) interacts with NAD(+).

The protein belongs to the transcriptional regulatory Rex family. As to quaternary structure, homodimer.

Its subcellular location is the cytoplasm. Functionally, modulates transcription in response to changes in cellular NADH/NAD(+) redox state. The protein is Redox-sensing transcriptional repressor Rex of Thermotoga petrophila (strain ATCC BAA-488 / DSM 13995 / JCM 10881 / RKU-1).